The sequence spans 277 residues: Large ribosomal subunit protein uL2 (277 aa).

The tract at residues 222–259 (GSVMNPNDHPHGGGEGKSPVGRPSPVTPWGKPALGYKT) is disordered.

The protein belongs to the universal ribosomal protein uL2 family. As to quaternary structure, part of the 50S ribosomal subunit. Forms a bridge to the 30S subunit in the 70S ribosome.

One of the primary rRNA binding proteins. Required for association of the 30S and 50S subunits to form the 70S ribosome, for tRNA binding and peptide bond formation. It has been suggested to have peptidyltransferase activity; this is somewhat controversial. Makes several contacts with the 16S rRNA in the 70S ribosome. This chain is Large ribosomal subunit protein uL2, found in Clostridium beijerinckii (strain ATCC 51743 / NCIMB 8052) (Clostridium acetobutylicum).